A 198-amino-acid chain; its full sequence is MRQFIVIGHDVPTDPDAVSLADLPGAGRLDVLCRCLNSAFFLSHDLRDNVRVWLVVGDEYAIRFEGSELRRLNPDERSTAALVRGALAAREKAIGSMAANPSPGVYIRTQSLSGLLESVADDGPLVTLHEDGQPVVDIDPSAEPTFVLSDHHSFDDAETALLAAHADRRVSLGPEPLHADHAITVAHNYLDTDGYNRY.

Residue Leu-128 coordinates S-adenosyl-L-methionine.

This sequence belongs to the methyltransferase superfamily. TrmY family. As to quaternary structure, homodimer.

It is found in the cytoplasm. It catalyses the reaction pseudouridine(54) in tRNA + S-adenosyl-L-methionine = N(1)-methylpseudouridine(54) in tRNA + S-adenosyl-L-homocysteine + H(+). In terms of biological role, specifically catalyzes the N1-methylation of pseudouridine at position 54 (Psi54) in tRNAs. This chain is tRNA (pseudouridine(54)-N(1))-methyltransferase, found in Natronomonas pharaonis (strain ATCC 35678 / DSM 2160 / CIP 103997 / JCM 8858 / NBRC 14720 / NCIMB 2260 / Gabara) (Halobacterium pharaonis).